The following is a 336-amino-acid chain: DNA-directed RNA polymerase subunit alpha (336 aa).

Residues Met-1–Asn-226 are alpha N-terminal domain (alpha-NTD). The alpha C-terminal domain (alpha-CTD) stretch occupies residues Leu-243–Leu-336.

It belongs to the RNA polymerase alpha chain family. Homodimer. The RNAP catalytic core consists of 2 alpha, 1 beta, 1 beta' and 1 omega subunit. When a sigma factor is associated with the core the holoenzyme is formed, which can initiate transcription.

It carries out the reaction RNA(n) + a ribonucleoside 5'-triphosphate = RNA(n+1) + diphosphate. Functionally, DNA-dependent RNA polymerase catalyzes the transcription of DNA into RNA using the four ribonucleoside triphosphates as substrates. This is DNA-directed RNA polymerase subunit alpha from Renibacterium salmoninarum (strain ATCC 33209 / DSM 20767 / JCM 11484 / NBRC 15589 / NCIMB 2235).